We begin with the raw amino-acid sequence, 414 residues long: Glutamyl-tRNA reductase (414 aa).

Substrate is bound by residues 49 to 52 (TCNR), serine 108, 113 to 115 (EPQ), and glutamine 119. Cysteine 50 functions as the Nucleophile in the catalytic mechanism. NADP(+) is bound at residue 188–193 (GAGQTG).

It belongs to the glutamyl-tRNA reductase family. As to quaternary structure, homodimer.

It catalyses the reaction (S)-4-amino-5-oxopentanoate + tRNA(Glu) + NADP(+) = L-glutamyl-tRNA(Glu) + NADPH + H(+). It functions in the pathway porphyrin-containing compound metabolism; protoporphyrin-IX biosynthesis; 5-aminolevulinate from L-glutamyl-tRNA(Glu): step 1/2. Functionally, catalyzes the NADPH-dependent reduction of glutamyl-tRNA(Glu) to glutamate 1-semialdehyde (GSA). In Francisella tularensis subsp. novicida (strain U112), this protein is Glutamyl-tRNA reductase.